The sequence spans 317 residues: Glutamyl-tRNA reductase-binding protein, chloroplastic (317 aa).

Residues 1-42 constitute a chloroplast transit peptide; sequence MQLQTQSFALNLLPSPNFAKPIERREFISLKRDPSRPISLRC.

As to quaternary structure, interacts with HEMA1 and forms a heterotetramer of two GLUTRBP and two HEMA1 subunits.

The protein localises to the plastid. It is found in the chloroplast stroma. In terms of biological role, involved in the regulation of glutamyl-tRNA reductase (GluTR) which is important for the synthesis and distribution of 5-aminolevulinate, a precursor in heme and chlorophyll biosynthesis. Stimulates GluTR activity and regulates glutamate-1-semialdehyde release. May play a role in heme metabolism. Necessary for efficient photosynthetic electron transport in chloroplasts. The polypeptide is Glutamyl-tRNA reductase-binding protein, chloroplastic (Arabidopsis thaliana (Mouse-ear cress)).